Reading from the N-terminus, the 1191-residue chain is uncharacterized protein (1191 aa).

11 WD repeats span residues 558-588 (GHRD…HLWT), 599-629 (GHTG…KIWD), 640-670 (GHQD…RLWH), 682-712 (GHTK…RLWD), 723-753 (LPEV…RLWT), 764-794 (GHDE…IHWS), 805-835 (GYPE…KVWD), 995-1025 (QRKE…TLWN), 1036-1066 (AHGD…KIWS), 1077-1107 (SDPL…RLWD), and 1118-1148 (STSG…QSWP).

This is an uncharacterized protein from Synechocystis sp. (strain ATCC 27184 / PCC 6803 / Kazusa).